Consider the following 118-residue polypeptide: Large ribosomal subunit protein uL18 (118 aa).

This sequence belongs to the universal ribosomal protein uL18 family. Part of the 50S ribosomal subunit; part of the 5S rRNA/L5/L18/L25 subcomplex. Contacts the 5S and 23S rRNAs.

Functionally, this is one of the proteins that bind and probably mediate the attachment of the 5S RNA into the large ribosomal subunit, where it forms part of the central protuberance. The sequence is that of Large ribosomal subunit protein uL18 from Helicobacter pylori (strain J99 / ATCC 700824) (Campylobacter pylori J99).